Consider the following 547-residue polypeptide: Cilia- and flagella- associated protein 210 (547 aa).

3 coiled-coil regions span residues 50–131 (ERIR…RKKA), 183–251 (VKLN…MKKN), and 342–405 (IARD…KADK). The segment at 214–237 (KQIEEHKEEEEARKKSEEKDAEEM) is disordered.

In terms of assembly, microtubule inner protein component of sperm flagellar doublet microtubules.

The protein localises to the cytoplasm. Its subcellular location is the cytoskeleton. It is found in the cilium axoneme. It localises to the flagellum axoneme. In terms of biological role, microtubule inner protein (MIP) part of the dynein-decorated doublet microtubules (DMTs) in cilia axoneme, which is required for motile cilia beating. This chain is Cilia- and flagella- associated protein 210 (Cfap210), found in Mus musculus (Mouse).